A 224-amino-acid polypeptide reads, in one-letter code: E3 ubiquitin-protein ligase TRIM48 (224 aa).

The segment at 31 to 72 (CPICMNYFIDPVTIDCGHSFCRPCFYLNWQDIPILTQCFECI) adopts an RING-type zinc-finger fold. The B box-type zinc finger occupies 104–145 (SEEQMCGIHRETKKMFCEVDRSLLCLLCSSSQEHRYHRHCPA). Positions 109, 112, 131, and 137 each coordinate Zn(2+).

It belongs to the TRIM/RBCC family. In terms of assembly, interacts with PRMT1; the interaction leads to ubiquitination of PRMT1 by TRIM48. Interacts with MAP3K5. Interacts with STRAP.

The protein localises to the cytoplasm. It localises to the cytosol. The enzyme catalyses S-ubiquitinyl-[E2 ubiquitin-conjugating enzyme]-L-cysteine + [acceptor protein]-L-lysine = [E2 ubiquitin-conjugating enzyme]-L-cysteine + N(6)-ubiquitinyl-[acceptor protein]-L-lysine.. E3 ubiquitin-protein ligase which promotes K48-linked polyubiquitination of protein methyltransferase PRMT1, leading to PRMT1 degradation. This suppresses methylation of the PRMT1 substrate MAP3K5/ASK1, promoting its activation and increasing MAP3K5-dependent cell death induced by oxidative stress. TRIM48-mediated ubiquitination of PRMT1 also suppresses methylation of FOXO1 by PRMT1, leading to inhibition of FOXO1 transcriptional activity. The chain is E3 ubiquitin-protein ligase TRIM48 from Homo sapiens (Human).